The sequence spans 396 residues: S-adenosylmethionine synthase (396 aa).

Residue H16 participates in ATP binding. D18 is a Mg(2+) binding site. E44 contributes to the K(+) binding site. E57 and Q100 together coordinate L-methionine. The tract at residues 100–110 (QSPDINQGVDR) is flexible loop. ATP-binding positions include 165 to 167 (DAK), D240, 246 to 247 (RK), A263, and K267. Residue D240 coordinates L-methionine. K271 is a binding site for L-methionine.

It belongs to the AdoMet synthase family. As to quaternary structure, homotetramer; dimer of dimers. Mg(2+) serves as cofactor. Requires K(+) as cofactor.

The protein resides in the cytoplasm. The enzyme catalyses L-methionine + ATP + H2O = S-adenosyl-L-methionine + phosphate + diphosphate. The protein operates within amino-acid biosynthesis; S-adenosyl-L-methionine biosynthesis; S-adenosyl-L-methionine from L-methionine: step 1/1. Its function is as follows. Catalyzes the formation of S-adenosylmethionine (AdoMet) from methionine and ATP. The overall synthetic reaction is composed of two sequential steps, AdoMet formation and the subsequent tripolyphosphate hydrolysis which occurs prior to release of AdoMet from the enzyme. This chain is S-adenosylmethionine synthase, found in Pseudomonas fluorescens (strain ATCC BAA-477 / NRRL B-23932 / Pf-5).